Here is a 154-residue protein sequence, read N- to C-terminus: MMNKGGRLRKAVRKSIPATFRLFLAFNFFVYGLAKVVIGQFGEVTPEIEAAAGKGFTIAWTFFGYSHVYELFIGFGEILAAVLLLIPRTAALGAVIFMPIIVNIVLINYCFDIGVQDLSTILMVMCLILLWMDRRKFMGIFRQEPIDSRQVMKR.

4 consecutive transmembrane segments (helical) span residues 20–42 (FRLFLAFNFFVYGLAKVVIGQFG), 62–84 (FFGYSHVYELFIGFGEILAAVLL), 91–109 (ALGAVIFMPIIVNIVLINY), and 113–132 (IGVQDLSTILMVMCLILLWM).

It is found in the cell membrane. This is an uncharacterized protein from Bacillus subtilis (strain 168).